Reading from the N-terminus, the 683-residue chain is E3 ubiquitin-protein ligase WAVH1 (683 aa).

An RING-type; atypical zinc finger spans residues 130-176 (CGICLQSVKSGQGTAIFTAECSHTFHFPCVTSRAAANHNRLASCPVC). One can recognise a VWFA domain in the interval 302-438 (DLVAVLDVSG…AHSRIPIHTI (137 aa)).

In terms of tissue distribution, expressed in root tips and leaf primordia.

The enzyme catalyses S-ubiquitinyl-[E2 ubiquitin-conjugating enzyme]-L-cysteine + [acceptor protein]-L-lysine = [E2 ubiquitin-conjugating enzyme]-L-cysteine + N(6)-ubiquitinyl-[acceptor protein]-L-lysine.. Its function is as follows. E3 ubiquitin-protein ligase involved in the regulation of root growth. Acts as a positive regulator of root gravitropism. Possesses E3 protein ligase activity in vitro. This is E3 ubiquitin-protein ligase WAVH1 from Arabidopsis thaliana (Mouse-ear cress).